Reading from the N-terminus, the 190-residue chain is MAFTSLLGSDAERKVAVAEVALRAVLCGLGALAAALVATDTQTRTFFSLQKKATYTDMKAMVLLVAAAAAAAGYSLLQAARCCCCVALLRTSIRPRARLLLAWCVFACDQALAYALLAAVVAALQASVVAKQGLPQLQWMAICALYGAFCRQAGAGVACAVAAAVDAALLAFLSAFNLFRLYGAKATTTT.

The Cytoplasmic segment spans residues 1–16; it reads MAFTSLLGSDAERKVA. The helical transmembrane segment at 17–37 threads the bilayer; sequence VAEVALRAVLCGLGALAAALV. Over 38-59 the chain is Extracellular; the sequence is ATDTQTRTFFSLQKKATYTDMK. Residues 60-80 form a helical membrane-spanning segment; that stretch reads AMVLLVAAAAAAAGYSLLQAA. The Cytoplasmic portion of the chain corresponds to 81 to 100; the sequence is RCCCCVALLRTSIRPRARLL. The chain crosses the membrane as a helical span at residues 101-121; that stretch reads LAWCVFACDQALAYALLAAVV. At 122 to 152 the chain is on the extracellular side; the sequence is AALQASVVAKQGLPQLQWMAICALYGAFCRQ. A helical membrane pass occupies residues 153–173; that stretch reads AGAGVACAVAAAVDAALLAFL. Over 174 to 190 the chain is Cytoplasmic; it reads SAFNLFRLYGAKATTTT.

The protein belongs to the Casparian strip membrane proteins (CASP) family. In terms of assembly, homodimer and heterodimers.

It localises to the cell membrane. In Zea mays (Maize), this protein is CASP-like protein 2U1.